The chain runs to 315 residues: 2,3-dihydroxyphenylpropionate/2,3-dihydroxicinnamic acid 1,2-dioxygenase (315 aa).

His-118 (proton donor) is an active-site residue. The active-site Proton acceptor is the His-182.

The protein belongs to the LigB/MhpB extradiol dioxygenase family. In terms of assembly, homotetramer. Fe(2+) serves as cofactor.

It carries out the reaction 3-(2,3-dihydroxyphenyl)propanoate + O2 = (2Z,4E)-2-hydroxy-6-oxonona-2,4-dienedioate + H(+). The catalysed reaction is (2E)-3-(2,3-dihydroxyphenyl)prop-2-enoate + O2 = (2Z,4E,7E)-2-hydroxy-6-oxonona-2,4,7-trienedioate + H(+). It participates in aromatic compound metabolism; 3-phenylpropanoate degradation. In terms of biological role, catalyzes the non-heme iron(II)-dependent oxidative cleavage of 2,3-dihydroxyphenylpropionic acid and 2,3-dihydroxicinnamic acid into 2-hydroxy-6-ketononadienedioate and 2-hydroxy-6-ketononatrienedioate, respectively. The polypeptide is 2,3-dihydroxyphenylpropionate/2,3-dihydroxicinnamic acid 1,2-dioxygenase (Mycolicibacterium gilvum (strain PYR-GCK) (Mycobacterium gilvum (strain PYR-GCK))).